A 97-amino-acid polypeptide reads, in one-letter code: RNA-binding protein Hfq (97 aa).

Residues 10–70 (DPFLNALRKE…ISTIVPARSV (61 aa)) enclose the Sm domain. Residues 74–97 (HENRPQAAPTSTLVQVETVQQPAE) form a disordered region. The segment covering 81–97 (APTSTLVQVETVQQPAE) has biased composition (polar residues).

The protein belongs to the Hfq family. Homohexamer.

Functionally, RNA chaperone that binds small regulatory RNA (sRNAs) and mRNAs to facilitate mRNA translational regulation in response to envelope stress, environmental stress and changes in metabolite concentrations. Also binds with high specificity to tRNAs. The polypeptide is RNA-binding protein Hfq (Neisseria meningitidis serogroup A / serotype 4A (strain DSM 15465 / Z2491)).